Reading from the N-terminus, the 406-residue chain is Inactive serine protease 35 (406 aa).

The signal sequence occupies residues 1–17 (MLLWLIIFVSGWTLSLG). A glycan (N-linked (GlcNAc...) asparagine) is linked at asparagine 87. The region spanning 121–401 (VYGTDSRFSI…ICLWIHGNAA (281 aa)) is the Peptidase S1 domain. A disulfide bridge links cysteine 151 with cysteine 167. Basic residues predominate over residues 186–204 (LKMRNKGGRKKRRGSRRSR). The disordered stretch occupies residues 186 to 248 (LKMRNKGGRK…RPSFQWTRVK (63 aa)).

The protein belongs to the peptidase S1 family.

It is found in the secreted. The sequence is that of Inactive serine protease 35 (Prss35) from Rattus norvegicus (Rat).